The primary structure comprises 297 residues: Lipoyl synthase (297 aa).

7 residues coordinate [4Fe-4S] cluster: Cys34, Cys39, Cys45, Cys60, Cys64, Cys67, and Ser273. The Radical SAM core domain maps to 46 to 262; it reads WNKRHATVMI…KYVAYSKGFL (217 aa).

Belongs to the radical SAM superfamily. Lipoyl synthase family. The cofactor is [4Fe-4S] cluster.

It is found in the cytoplasm. It carries out the reaction [[Fe-S] cluster scaffold protein carrying a second [4Fe-4S](2+) cluster] + N(6)-octanoyl-L-lysyl-[protein] + 2 oxidized [2Fe-2S]-[ferredoxin] + 2 S-adenosyl-L-methionine + 4 H(+) = [[Fe-S] cluster scaffold protein] + N(6)-[(R)-dihydrolipoyl]-L-lysyl-[protein] + 4 Fe(3+) + 2 hydrogen sulfide + 2 5'-deoxyadenosine + 2 L-methionine + 2 reduced [2Fe-2S]-[ferredoxin]. The protein operates within protein modification; protein lipoylation via endogenous pathway; protein N(6)-(lipoyl)lysine from octanoyl-[acyl-carrier-protein]: step 2/2. Its function is as follows. Catalyzes the radical-mediated insertion of two sulfur atoms into the C-6 and C-8 positions of the octanoyl moiety bound to the lipoyl domains of lipoate-dependent enzymes, thereby converting the octanoylated domains into lipoylated derivatives. The sequence is that of Lipoyl synthase from Ehrlichia chaffeensis (strain ATCC CRL-10679 / Arkansas).